A 307-amino-acid chain; its full sequence is Undecaprenyl-diphosphatase (307 aa).

A run of 6 helical transmembrane segments spans residues 40 to 60 (AAKT…VVYF), 79 to 99 (LRLA…GLLF), 107 to 127 (LFGP…MIGV), 183 to 203 (AAAA…ATVF), 219 to 239 (IVAL…VIAV), and 249 to 269 (LAPF…LWIA).

The protein belongs to the UppP family.

It localises to the cell inner membrane. It catalyses the reaction di-trans,octa-cis-undecaprenyl diphosphate + H2O = di-trans,octa-cis-undecaprenyl phosphate + phosphate + H(+). Functionally, catalyzes the dephosphorylation of undecaprenyl diphosphate (UPP). Confers resistance to bacitracin. The chain is Undecaprenyl-diphosphatase from Sorangium cellulosum (strain So ce56) (Polyangium cellulosum (strain So ce56)).